We begin with the raw amino-acid sequence, 90 residues long: Probable Fe(2+)-trafficking protein (90 aa).

Belongs to the Fe(2+)-trafficking protein family.

Could be a mediator in iron transactions between iron acquisition and iron-requiring processes, such as synthesis and/or repair of Fe-S clusters in biosynthetic enzymes. This is Probable Fe(2+)-trafficking protein from Saccharophagus degradans (strain 2-40 / ATCC 43961 / DSM 17024).